The following is a 218-amino-acid chain: Peptide methionine sulfoxide reductase MsrA (218 aa).

Cysteine 57 is an active-site residue.

This sequence belongs to the MsrA Met sulfoxide reductase family.

The catalysed reaction is L-methionyl-[protein] + [thioredoxin]-disulfide + H2O = L-methionyl-(S)-S-oxide-[protein] + [thioredoxin]-dithiol. It carries out the reaction [thioredoxin]-disulfide + L-methionine + H2O = L-methionine (S)-S-oxide + [thioredoxin]-dithiol. In terms of biological role, has an important function as a repair enzyme for proteins that have been inactivated by oxidation. Catalyzes the reversible oxidation-reduction of methionine sulfoxide in proteins to methionine. This is Peptide methionine sulfoxide reductase MsrA from Brucella anthropi (Ochrobactrum anthropi).